A 141-amino-acid polypeptide reads, in one-letter code: Large ribosomal subunit protein uL11 (141 aa).

Belongs to the universal ribosomal protein uL11 family. Part of the ribosomal stalk of the 50S ribosomal subunit. Interacts with L10 and the large rRNA to form the base of the stalk. L10 forms an elongated spine to which L12 dimers bind in a sequential fashion forming a multimeric L10(L12)X complex. One or more lysine residues are methylated.

Functionally, forms part of the ribosomal stalk which helps the ribosome interact with GTP-bound translation factors. This Clostridium botulinum (strain Kyoto / Type A2) protein is Large ribosomal subunit protein uL11.